The following is a 719-amino-acid chain: Phosphoribosylformylglycinamidine synthase subunit PurL (719 aa).

Residue H45 is part of the active site. The ATP site is built by Y48 and K87. E89 provides a ligand contact to Mg(2+). Residues 90-93 (SHNH) and R112 each bind substrate. H91 (proton acceptor) is an active-site residue. D113 contributes to the Mg(2+) binding site. Substrate is bound at residue Q236. D264 is a binding site for Mg(2+). 308–310 (ESQ) lines the substrate pocket. 2 residues coordinate ATP: N493 and G530. Position 531 (N531) interacts with Mg(2+). Residue S533 participates in substrate binding.

Belongs to the FGAMS family. As to quaternary structure, monomer. Part of the FGAM synthase complex composed of 1 PurL, 1 PurQ and 2 PurS subunits.

It is found in the cytoplasm. It carries out the reaction N(2)-formyl-N(1)-(5-phospho-beta-D-ribosyl)glycinamide + L-glutamine + ATP + H2O = 2-formamido-N(1)-(5-O-phospho-beta-D-ribosyl)acetamidine + L-glutamate + ADP + phosphate + H(+). Its pathway is purine metabolism; IMP biosynthesis via de novo pathway; 5-amino-1-(5-phospho-D-ribosyl)imidazole from N(2)-formyl-N(1)-(5-phospho-D-ribosyl)glycinamide: step 1/2. In terms of biological role, part of the phosphoribosylformylglycinamidine synthase complex involved in the purines biosynthetic pathway. Catalyzes the ATP-dependent conversion of formylglycinamide ribonucleotide (FGAR) and glutamine to yield formylglycinamidine ribonucleotide (FGAM) and glutamate. The FGAM synthase complex is composed of three subunits. PurQ produces an ammonia molecule by converting glutamine to glutamate. PurL transfers the ammonia molecule to FGAR to form FGAM in an ATP-dependent manner. PurS interacts with PurQ and PurL and is thought to assist in the transfer of the ammonia molecule from PurQ to PurL. The chain is Phosphoribosylformylglycinamidine synthase subunit PurL from Novosphingobium aromaticivorans (strain ATCC 700278 / DSM 12444 / CCUG 56034 / CIP 105152 / NBRC 16084 / F199).